A 405-amino-acid chain; its full sequence is Molybdopterin molybdenumtransferase 2 (405 aa).

It belongs to the MoeA family. Mg(2+) is required as a cofactor.

The enzyme catalyses adenylyl-molybdopterin + molybdate = Mo-molybdopterin + AMP + H(+). The protein operates within cofactor biosynthesis; molybdopterin biosynthesis. Its function is as follows. Catalyzes the insertion of molybdate into adenylated molybdopterin with the concomitant release of AMP. The polypeptide is Molybdopterin molybdenumtransferase 2 (moaE2) (Mycobacterium tuberculosis (strain CDC 1551 / Oshkosh)).